Here is a 64-residue protein sequence, read N- to C-terminus: uncharacterized protein (64 aa).

This is an uncharacterized protein from Dictyostelium discoideum (Social amoeba).